A 414-amino-acid chain; its full sequence is Glucose-1-phosphate adenylyltransferase (414 aa).

Residues Gly164, 184 to 185 (EK), and Ser204 each bind alpha-D-glucose 1-phosphate.

This sequence belongs to the bacterial/plant glucose-1-phosphate adenylyltransferase family. In terms of assembly, homotetramer.

It carries out the reaction alpha-D-glucose 1-phosphate + ATP + H(+) = ADP-alpha-D-glucose + diphosphate. It functions in the pathway glycan biosynthesis; glycogen biosynthesis. Its function is as follows. Involved in the biosynthesis of ADP-glucose, a building block required for the elongation reactions to produce glycogen. Catalyzes the reaction between ATP and alpha-D-glucose 1-phosphate (G1P) to produce pyrophosphate and ADP-Glc. The chain is Glucose-1-phosphate adenylyltransferase from Acidothermus cellulolyticus (strain ATCC 43068 / DSM 8971 / 11B).